Reading from the N-terminus, the 366-residue chain is GTP cyclohydrolase 1 type 2 homolog (366 aa).

Histidine 64, histidine 65, aspartate 102, histidine 326, and glutamate 329 together coordinate Zn(2+).

It belongs to the GTP cyclohydrolase I type 2/NIF3 family. As to quaternary structure, homohexamer.

This Staphylococcus aureus (strain MSSA476) protein is GTP cyclohydrolase 1 type 2 homolog.